The sequence spans 493 residues: Ferruginol synthase 1 (493 aa).

The chain crosses the membrane as a helical span at residues 2–22 (DSFPLLAALFFILAATWFISF). Heme is bound at residue Cys-437.

It belongs to the cytochrome P450 family. Requires heme as cofactor. As to expression, expressed in leaf glandular trichomes.

Its subcellular location is the membrane. The catalysed reaction is abieta-8,11,13-triene + reduced [NADPH--hemoprotein reductase] + O2 = ferruginol + oxidized [NADPH--hemoprotein reductase] + H2O + H(+). It catalyses the reaction ferruginol + reduced [NADPH--hemoprotein reductase] + O2 = 11-hydroxyferruginol + oxidized [NADPH--hemoprotein reductase] + H2O + H(+). The enzyme catalyses miltiradiene + 2 reduced [NADPH--hemoprotein reductase] + 2 O2 = 11-oxomiltiradiene + 2 oxidized [NADPH--hemoprotein reductase] + 3 H2O + 2 H(+). The protein operates within secondary metabolite biosynthesis; terpenoid biosynthesis. In terms of biological role, monooxygenase involved in the biosynthesis of labdane-related diterpenes natural products. Catalyzes the oxidation of abietatriene to produce ferruginol. Catalyzes the oxidation of ferruginol at C-12 to produce 11-hydroxyferruginol. Ferruginol and 11-hydroxyferruginol are intermediates in the biosynthesis of carnosate, a potent antioxidant. May also convert miltiradiene into 11-oxomiltiradiene. The protein is Ferruginol synthase 1 of Rosmarinus officinalis (Rosemary).